A 953-amino-acid polypeptide reads, in one-letter code: TPR repeat-containing protein ZIP4 (953 aa).

The TPR 1 repeat unit spans residues 129–162 (ASFFHRSGLAWLDLGRVDLASACFEKATPLVSAA). A disordered region spans residues 248–269 (AASPSSSSPRTPPYGGATPKTP). TPR repeat units follow at residues 432–465 (HALLWNCGTEHFRAKNYDTSADLIERSMLYVSRD) and 473–506 (ADCFRVLSICHIALQHLDRALEFVNEAYKVEPNI). The disordered stretch occupies residues 925-953 (VSGDEPDECSQEEAPKASISGSMSQPVLV). The segment covering 943–953 (ISGSMSQPVLV) has biased composition (polar residues).

As to quaternary structure, interacts with HEI10 and SHOC1.

The protein localises to the nucleus. The protein resides in the chromosome. Required for crossover formation, complete synapsis of homologous chromosomes and bivalent formation during meiosis. Is specific to recombination events resulting in interference-sensitive crossovers (class I meiotic crossover) and works cooperatively with MER3 to promote crossovers. The polypeptide is TPR repeat-containing protein ZIP4 (Oryza sativa subsp. japonica (Rice)).